A 267-amino-acid polypeptide reads, in one-letter code: NAD kinase 1 (267 aa).

The Proton acceptor role is filled by aspartate 45. NAD(+) contacts are provided by residues 45 to 46 (DG), 122 to 123 (NE), arginine 149, aspartate 151, and alanine 186.

It belongs to the NAD kinase family. It depends on a divalent metal cation as a cofactor.

The protein resides in the cytoplasm. It carries out the reaction NAD(+) + ATP = ADP + NADP(+) + H(+). In terms of biological role, involved in the regulation of the intracellular balance of NAD and NADP, and is a key enzyme in the biosynthesis of NADP. Catalyzes specifically the phosphorylation on 2'-hydroxyl of the adenosine moiety of NAD to yield NADP. This is NAD kinase 1 from Oceanobacillus iheyensis (strain DSM 14371 / CIP 107618 / JCM 11309 / KCTC 3954 / HTE831).